A 31-amino-acid chain; its full sequence is Cyclotide vibi-F (31 aa).

Residues 1 to 31 constitute a cross-link (cyclopeptide (Gly-Asn)); sequence GTIPCGESCVFIPCLTSALGCSCKSKVCYKN. 3 cysteine pairs are disulfide-bonded: Cys-5–Cys-21, Cys-9–Cys-23, and Cys-14–Cys-28.

In terms of processing, this is a cyclic peptide.

Probably participates in a plant defense mechanism. In Viola biflora (Yellow wood violet), this protein is Cyclotide vibi-F.